Here is a 762-residue protein sequence, read N- to C-terminus: Proline-rich receptor-like protein kinase PERK10 (762 aa).

Residues 1-322 (MTTPAQAPRE…PTPVTDNSSS (322 aa)) form a disordered region. At 1–328 (MTTPAQAPRE…NSSSSGISIA (328 aa)) the chain is on the extracellular side. Over residues 13–23 (SLSPSLASPPL) the composition is skewed to low complexity. N-linked (GlcNAc...) asparagine glycosylation is present at Asn-37. The span at 41–57 (PTREPTNGNPPETTNTP) shows a compositional bias: low complexity. Pro residues-rich tracts occupy residues 60–210 (SSPP…PSTP), 231–246 (PPPP…PPSP), and 254–275 (HPSP…PDPL). Low complexity predominate over residues 276-305 (PSNSSSPPTLLPPSSVVSPPSPPRKSVSGP). 2 N-linked (GlcNAc...) asparagine glycosylation sites follow: Asn-278 and Asn-319. Residues 329 to 349 (AVVGVSIGVALVLLTLIGVVV) traverse the membrane as a helical segment. Residues 350–762 (CCLKKRKKRL…NSYISKDENL (413 aa)) are Cytoplasmic-facing. Residues 370-410 (TPMESSSPRSDSALLKTQSSAPLVGNRSSNRTYLSQSEPGG) are disordered. A compositionally biased stretch (polar residues) spans 372–407 (MESSSPRSDSALLKTQSSAPLVGNRSSNRTYLSQSE). Residues 430-706 (FSDENLLGEG…SQIVRAFDSL (277 aa)) enclose the Protein kinase domain. Residues 436 to 444 (LGEGGFGRV) and Lys-458 contribute to the ATP site. Asp-554 functions as the Proton acceptor in the catalytic mechanism.

The protein belongs to the protein kinase superfamily. Ser/Thr protein kinase family. As to quaternary structure, interacts with KIPK1 and KIPK2 (via its cytosolic domain). In terms of tissue distribution, mostly expressed in inflorescence bolts and flower buds, and, to a lower extent, in roots, seedlings, leaves and siliques.

It localises to the cell membrane. The enzyme catalyses L-seryl-[protein] + ATP = O-phospho-L-seryl-[protein] + ADP + H(+). It catalyses the reaction L-threonyl-[protein] + ATP = O-phospho-L-threonyl-[protein] + ADP + H(+). Functionally, could be involved in the negative regulation of root growth. This chain is Proline-rich receptor-like protein kinase PERK10 (PERK10), found in Arabidopsis thaliana (Mouse-ear cress).